We begin with the raw amino-acid sequence, 91 residues long: Small ribosomal subunit protein bS20 (91 aa).

The tract at residues 1–25 is disordered; sequence MANTKSAEKRHRQSLKRRARNVTVR. Positions 8-20 are enriched in basic residues; it reads EKRHRQSLKRRAR.

This sequence belongs to the bacterial ribosomal protein bS20 family.

Binds directly to 16S ribosomal RNA. This Myxococcus xanthus (strain DK1622) protein is Small ribosomal subunit protein bS20.